A 293-amino-acid chain; its full sequence is UDP-N-acetylglucosamine transferase subunit ALG13 (293 aa).

This sequence belongs to the glycosyltransferase 28 family. In terms of assembly, heterodimer with ALG14 to form a functional enzyme.

The protein localises to the endoplasmic reticulum. It catalyses the reaction an N-acetyl-alpha-D-glucosaminyl-diphospho-di-trans,poly-cis-dolichol + UDP-N-acetyl-alpha-D-glucosamine = an N,N'-diacetylchitobiosyl-diphospho-di-trans,poly-cis-dolichol + UDP + H(+). Involved in protein N-glycosylation. Essential for the second step of the dolichol-linked oligosaccharide pathway. This is UDP-N-acetylglucosamine transferase subunit ALG13 (ALG13) from Candida albicans (strain SC5314 / ATCC MYA-2876) (Yeast).